A 629-amino-acid chain; its full sequence is Phosphomethylpyrimidine synthase (629 aa).

The tract at residues 1-30 is disordered; sequence MTTKLKNASNLSESAQVDQQSVQPFTRSQK. Substrate is bound by residues Asn-233, Met-262, Tyr-291, His-327, 347-349, 388-391, and Glu-427; these read SRG and DGLR. A Zn(2+)-binding site is contributed by His-431. Tyr-454 contacts substrate. A Zn(2+)-binding site is contributed by His-495. [4Fe-4S] cluster contacts are provided by Cys-575, Cys-578, and Cys-583.

This sequence belongs to the ThiC family. Homodimer. [4Fe-4S] cluster serves as cofactor.

The catalysed reaction is 5-amino-1-(5-phospho-beta-D-ribosyl)imidazole + S-adenosyl-L-methionine = 4-amino-2-methyl-5-(phosphooxymethyl)pyrimidine + CO + 5'-deoxyadenosine + formate + L-methionine + 3 H(+). Its pathway is cofactor biosynthesis; thiamine diphosphate biosynthesis. Its function is as follows. Catalyzes the synthesis of the hydroxymethylpyrimidine phosphate (HMP-P) moiety of thiamine from aminoimidazole ribotide (AIR) in a radical S-adenosyl-L-methionine (SAM)-dependent reaction. In Pseudomonas fluorescens (strain ATCC BAA-477 / NRRL B-23932 / Pf-5), this protein is Phosphomethylpyrimidine synthase.